We begin with the raw amino-acid sequence, 134 residues long: Ribonuclease P protein component (134 aa).

It belongs to the RnpA family. As to quaternary structure, consists of a catalytic RNA component (M1 or rnpB) and a protein subunit.

It catalyses the reaction Endonucleolytic cleavage of RNA, removing 5'-extranucleotides from tRNA precursor.. Functionally, RNaseP catalyzes the removal of the 5'-leader sequence from pre-tRNA to produce the mature 5'-terminus. It can also cleave other RNA substrates such as 4.5S RNA. The protein component plays an auxiliary but essential role in vivo by binding to the 5'-leader sequence and broadening the substrate specificity of the ribozyme. This chain is Ribonuclease P protein component, found in Pseudomonas putida (strain GB-1).